The chain runs to 257 residues: Ribonuclease HII (257 aa).

Positions 72–257 (ERVAGIDEVG…FSPVQKILQA (186 aa)) constitute an RNase H type-2 domain. Positions 78, 79, and 170 each coordinate a divalent metal cation.

It belongs to the RNase HII family. Mn(2+) serves as cofactor. Requires Mg(2+) as cofactor.

It is found in the cytoplasm. It catalyses the reaction Endonucleolytic cleavage to 5'-phosphomonoester.. Endonuclease that specifically degrades the RNA of RNA-DNA hybrids. The protein is Ribonuclease HII of Levilactobacillus brevis (strain ATCC 367 / BCRC 12310 / CIP 105137 / JCM 1170 / LMG 11437 / NCIMB 947 / NCTC 947) (Lactobacillus brevis).